Reading from the N-terminus, the 323-residue chain is Cyclin-D5-1 (323 aa).

Disordered stretches follow at residues 17–36 (ESSL…KQEP) and 281–323 (HMTP…MRRL).

It belongs to the cyclin family. Cyclin D subfamily.

The protein is Cyclin-D5-1 (CYCD5-1) of Arabidopsis thaliana (Mouse-ear cress).